A 271-amino-acid chain; its full sequence is Tryptophan synthase alpha chain (271 aa).

Active-site proton acceptor residues include E49 and D60.

The protein belongs to the TrpA family. As to quaternary structure, tetramer of two alpha and two beta chains.

It catalyses the reaction (1S,2R)-1-C-(indol-3-yl)glycerol 3-phosphate + L-serine = D-glyceraldehyde 3-phosphate + L-tryptophan + H2O. It functions in the pathway amino-acid biosynthesis; L-tryptophan biosynthesis; L-tryptophan from chorismate: step 5/5. Its function is as follows. The alpha subunit is responsible for the aldol cleavage of indoleglycerol phosphate to indole and glyceraldehyde 3-phosphate. The chain is Tryptophan synthase alpha chain from Blochmanniella floridana.